The chain runs to 85 residues: U4-theraphotoxin-Hhn1a (85 aa).

Residues 1–22 (MKMTLIAILTCAAVLVLHITAA) form the signal peptide. A propeptide spanning residues 23 to 48 (EELEAESQLMEVGMPDTELEAVDEER) is cleaved from the precursor. 3 cysteine pairs are disulfide-bonded: Cys52-Cys66, Cys56-Cys77, and Cys71-Cys82.

This sequence belongs to the neurotoxin 12 (Hwtx-2) family. 02 (Hwtx-2) subfamily. In terms of assembly, monomer. Expressed by the venom gland.

Its subcellular location is the secreted. In terms of biological role, neurotoxin active on both insects and mammals. This is U4-theraphotoxin-Hhn1a from Cyriopagopus hainanus (Chinese bird spider).